We begin with the raw amino-acid sequence, 852 residues long: Probable inorganic carbon transporter subunit DabA (852 aa).

Cys-370, Asp-372, His-554, and Cys-569 together coordinate Zn(2+).

The protein belongs to the inorganic carbon transporter (TC 9.A.2) DabA family. In terms of assembly, forms a complex with DabB. Requires Zn(2+) as cofactor.

It is found in the cell inner membrane. Its function is as follows. Part of an energy-coupled inorganic carbon pump. This Novosphingobium aromaticivorans (strain ATCC 700278 / DSM 12444 / CCUG 56034 / CIP 105152 / NBRC 16084 / F199) protein is Probable inorganic carbon transporter subunit DabA.